Here is a 589-residue protein sequence, read N- to C-terminus: MGICLMKRCCSWFLLISFLSALTNENEAISPDGEALLSFRNGVLASDGVIGLWRPEDPDPCNWKGVTCDAKTKRVIALSLTYHKLRGPLPPELGKLDQLRLLMLHNNALYQSIPASLGNCTALEGIYLQNNYITGTIPSEIGNLSGLKNLDLSNNNLNGAIPASLGQLKRLTKFNVSNNFLVGKIPSDGLLARLSRDSFNGNRNLCGKQIDIVCNDSGNSTASGSPTGQGGNNPKRLLISASATVGGLLLVALMCFWGCFLYKKLGRVESKSLVIDVGGGASIVMFHGDLPYASKDIIKKLESLNEEHIIGCGGFGTVYKLSMDDGNVFALKRIVKLNEGFDRFFERELEILGSIKHRYLVNLRGYCNSPTSKLLLYDYLPGGSLDEALHKRGEQLDWDSRVNIIIGAAKGLAYLHHDCSPRIIHRDIKSSNILLDGNLEARVSDFGLAKLLEDEESHITTIVAGTFGYLAPEYMQSGRATEKTDVYSFGVLVLEVLSGKLPTDASFIEKGFNIVGWLNFLISENRAKEIVDLSCEGVERESLDALLSIATKCVSSSPDERPTMHRVVQLLESEVMTPCPSDFYDSSSD.

The signal sequence occupies residues 1-28 (MGICLMKRCCSWFLLISFLSALTNENEA). The Extracellular segment spans residues 29–236 (ISPDGEALLS…TGQGGNNPKR (208 aa)). LRR repeat units follow at residues 72-96 (TKRV…LGKL), 97-120 (DQLR…LGNC), 122-144 (ALEG…IGNL), 145-168 (SGLK…LGQL), and 170-193 (RLTK…LLAR). Asparagine 119 and asparagine 143 each carry an N-linked (GlcNAc...) asparagine glycan. 3 N-linked (GlcNAc...) asparagine glycosylation sites follow: asparagine 175, asparagine 215, and asparagine 219. The chain crosses the membrane as a helical span at residues 237-257 (LLISASATVGGLLLVALMCFW). Residues 258-589 (GCFLYKKLGR…PSDFYDSSSD (332 aa)) are Cytoplasmic-facing. The Protein kinase domain maps to 304–576 (LNEEHIIGCG…VVQLLESEVM (273 aa)). ATP is bound by residues 310–318 (IGCGGFGTV) and lysine 332. Serine 384 carries the post-translational modification Phosphoserine. Catalysis depends on aspartate 427, which acts as the Proton acceptor. Threonine 460, threonine 461, and threonine 466 each carry phosphothreonine. Residue tyrosine 474 is modified to Phosphotyrosine.

The protein belongs to the protein kinase superfamily. Ser/Thr protein kinase family. As to quaternary structure, interacts with the ACC synthases ACS5 and ACS9 but not ACS2, via the kinase domain. In terms of processing, autophosphorylated. In terms of tissue distribution, expressed in the root meristem and elongation zone, and in hypocotyls of etiolated seedlings.

It localises to the cell membrane. It carries out the reaction L-seryl-[protein] + ATP = O-phospho-L-seryl-[protein] + ADP + H(+). The enzyme catalyses L-threonyl-[protein] + ATP = O-phospho-L-threonyl-[protein] + ADP + H(+). Involved in the signaling pathway that regulates cell wall function, including cellulose biosynthesis, likely via an 1-aminocyclopropane-1-carboxylic acid (ACC)-mediated signal (a precursor of ethylene). The sequence is that of LRR receptor-like serine/threonine-protein kinase FEI 2 (FEI2) from Arabidopsis thaliana (Mouse-ear cress).